Here is a 453-residue protein sequence, read N- to C-terminus: uncharacterized protein (453 aa).

[4Fe-4S] cluster-binding residues include Cys74, Cys80, Cys83, and Cys162. The S-adenosyl-L-methionine site is built by Gln286, Tyr315, Glu336, and Asp384. The active-site Nucleophile is the Cys411.

The protein belongs to the class I-like SAM-binding methyltransferase superfamily. RNA M5U methyltransferase family.

This is an uncharacterized protein from Staphylococcus aureus (strain COL).